The following is a 175-amino-acid chain: Large ribosomal subunit protein uL6 (175 aa).

Belongs to the universal ribosomal protein uL6 family. As to quaternary structure, part of the 50S ribosomal subunit.

This protein binds to the 23S rRNA, and is important in its secondary structure. It is located near the subunit interface in the base of the L7/L12 stalk, and near the tRNA binding site of the peptidyltransferase center. This chain is Large ribosomal subunit protein uL6, found in Xylella fastidiosa (strain 9a5c).